A 577-amino-acid chain; its full sequence is Secreted LysM effector Lys4 (577 aa).

Positions 1–19 (MRALTAAVLFVAGLTPVLA) are cleaved as a signal peptide. One can recognise a LysM 1 domain in the interval 38-85 (AWYTIVKGDGCDTVEKKFKITPEQFFKWNPDVSTDCVKNFWVGNSYCV). The segment covering 96–121 (TSTTVKSSSTTQKTSSTSSKLSSSSK) has biased composition (low complexity). Residues 96–135 (TSTTVKSSSTTQKTSSTSSKLSSSSKPVNTTTTPYSTRNP) are disordered. A compositionally biased stretch (polar residues) spans 122–135 (PVNTTTTPYSTRNP). 4 N-linked (GlcNAc...) asparagine glycosylation sites follow: asparagine 124, asparagine 140, asparagine 216, and asparagine 235. LysM domains are found at residues 251–298 (NFYQ…YYCV), 328–375 (KWYQ…WYCV), and 408–455 (QYWL…YVCV). Over residues 464-485 (SGSTTTITGPPTKGSNPPTTTT) the composition is skewed to low complexity. Residues 464 to 490 (SGSTTTITGPPTKGSNPPTTTTSGGGG) are disordered. The region spanning 510 to 558 (FWFRGKDGASLFCADIAKDAGVSLPDFLKWNPGVGSNCESLWADTWYCV) is the LysM 5 domain.

The protein belongs to the secreted LysM effector family.

Might have a role in sequestration of chitin oligosaccharides (breakdown products of fungal cell walls that are released during invasion and act as triggers of host immunity) to dampen host defense. The sequence is that of Secreted LysM effector Lys4 from Pochonia chlamydosporia (strain 123) (Metacordyceps chlamydosporia).